The chain runs to 243 residues: Carboxy-S-adenosyl-L-methionine synthase (243 aa).

S-adenosyl-L-methionine contacts are provided by residues Tyr-40, 65–67 (GSS), 90–91 (DN), 118–119 (DI), Asn-133, and Arg-200.

This sequence belongs to the class I-like SAM-binding methyltransferase superfamily. Cx-SAM synthase family. As to quaternary structure, homodimer.

The enzyme catalyses prephenate + S-adenosyl-L-methionine = carboxy-S-adenosyl-L-methionine + 3-phenylpyruvate + H2O. Catalyzes the conversion of S-adenosyl-L-methionine (SAM) to carboxy-S-adenosyl-L-methionine (Cx-SAM). In Shewanella denitrificans (strain OS217 / ATCC BAA-1090 / DSM 15013), this protein is Carboxy-S-adenosyl-L-methionine synthase.